Reading from the N-terminus, the 212-residue chain is ER lumen protein-retaining receptor 1 (212 aa).

Over 1–4 the chain is Lumenal; the sequence is MNLF. Residues 5 to 24 form a helical membrane-spanning segment; it reads RFLGDLSHLLAIILLLLKIW. At 25–32 the chain is on the cytoplasmic side; the sequence is KSRSCAGI. Residues 33-52 form a helical membrane-spanning segment; the sequence is SGKSQVLFAVVFTARYLDLF. The segment at 47 to 48 is interaction with the K-D-E-L motif on target proteins; it reads RY. Over 53–58 the chain is Lumenal; sequence TNYISL. A helical membrane pass occupies residues 59 to 79; the sequence is YNTCMKVVYIACSFTTVWMIY. Residues 80–92 lie on the Cytoplasmic side of the membrane; it reads SKFKATYDGNHDT. The chain crosses the membrane as a helical span at residues 93–110; that stretch reads FRVEFLVIPTAILAFLVN. Residues 111–116 lie on the Lumenal side of the membrane; sequence HDFTPL. The chain crosses the membrane as a helical span at residues 117–135; that stretch reads EILWTFSIYLESVAILPQL. The Cytoplasmic portion of the chain corresponds to 136 to 149; the sequence is FMVSKTGEAETITS. The helical transmembrane segment at 150-168 threads the bilayer; it reads HYLFALGVYRTLYLFNWIW. Residues 159–169 are interaction with the K-D-E-L motif on target proteins; sequence RTLYLFNWIWR. The Lumenal segment spans residues 169 to 178; it reads RYHFEGFFDL. The chain crosses the membrane as a helical span at residues 179–199; sequence IAIVAGLVQTVLYCDFFYLYI. The Cytoplasmic segment spans residues 200–212; sequence TKVLKGKKLSLPA. The segment at 204 to 207 is important for recycling of cargo proteins with the sequence motif K-D-E-L from the Golgi to the endoplasmic reticulum; sequence KGKK. The residue at position 209 (Ser-209) is a Phosphoserine; by PKA.

This sequence belongs to the ERD2 family. As to quaternary structure, upon ligand binding the receptor oligomerizes and interacts with components of the transport machinery such as ARFGAP1 and ARF1. Post-translationally, phosphorylation by PKA at Ser-209 is required for endoplasmic reticulum retention function.

Its subcellular location is the golgi apparatus membrane. It is found in the cytoplasmic vesicle. It localises to the COPI-coated vesicle membrane. The protein resides in the endoplasmic reticulum membrane. The protein localises to the endoplasmic reticulum-Golgi intermediate compartment membrane. Its function is as follows. Receptor for the C-terminal sequence motif K-D-E-L that is present on endoplasmic reticulum resident proteins and that mediates their recycling from the Golgi back to the endoplasmic reticulum. This chain is ER lumen protein-retaining receptor 1 (KDELR1), found in Bos taurus (Bovine).